A 382-amino-acid chain; its full sequence is G-box-binding factor 3 (382 aa).

Residues 1–16 (MGNSSEEPKPPTKSDK) show a composition bias toward basic and acidic residues. Disordered regions lie at residues 1–26 (MGNS…DQTN), 97–221 (MGSL…GVKL), and 257–285 (EREL…AETE). Polar residues predominate over residues 111-130 (TPGTLLSIDTPTKSTGNTDN). Basic and acidic residues predominate over residues 155–165 (ADEHKRSRNSS). A compositionally biased stretch (low complexity) spans 166-181 (ETDGSTDGSDGNTTGA). Residues 182-199 (DEPKLKRSREGTPTKDGK) are compositionally biased toward basic and acidic residues. A compositionally biased stretch (polar residues) spans 202–216 (VQASSFHSVSPSSGD). Residues 259-322 (ELKRERRKQS…DKLRGANATL (64 aa)) form the bZIP domain. The segment at 261–280 (KRERRKQSNRESARRSRLRK) is basic motif. A leucine-zipper region spans residues 287–322 (LARKVEALTAENMALRSELNQLNEKSDKLRGANATL). Residues 329 to 382 (SEPEKRVPANMLSRVKNSGAGDKNKNQGDNDSNSTSKLHQLLDTKPRAKAVAAG) form a disordered region. A compositionally biased stretch (polar residues) spans 357–366 (DNDSNSTSKL).

Belongs to the bZIP family. In terms of assembly, DNA-binding heterodimer. Interacts with GBF4. Interacts with BZIP16 and BZIP68. Present only in dark grown leaves and roots.

The protein localises to the nucleus. Its function is as follows. Binds to the G-box motif (5'-CCACGTGG-3') of the rbcS-1A gene promoter. G-box and G-box-like motifs are cis-acting elements defined in promoters of certain plant genes which are regulated by such diverse stimuli as light-induction or hormone control. This chain is G-box-binding factor 3 (GBF3), found in Arabidopsis thaliana (Mouse-ear cress).